The primary structure comprises 251 residues: Imidazole glycerol phosphate synthase subunit HisF (251 aa).

Residues D11 and D130 contribute to the active site.

It belongs to the HisA/HisF family. As to quaternary structure, heterodimer of HisH and HisF.

The protein resides in the cytoplasm. It catalyses the reaction 5-[(5-phospho-1-deoxy-D-ribulos-1-ylimino)methylamino]-1-(5-phospho-beta-D-ribosyl)imidazole-4-carboxamide + L-glutamine = D-erythro-1-(imidazol-4-yl)glycerol 3-phosphate + 5-amino-1-(5-phospho-beta-D-ribosyl)imidazole-4-carboxamide + L-glutamate + H(+). Its pathway is amino-acid biosynthesis; L-histidine biosynthesis; L-histidine from 5-phospho-alpha-D-ribose 1-diphosphate: step 5/9. In terms of biological role, IGPS catalyzes the conversion of PRFAR and glutamine to IGP, AICAR and glutamate. The HisF subunit catalyzes the cyclization activity that produces IGP and AICAR from PRFAR using the ammonia provided by the HisH subunit. The chain is Imidazole glycerol phosphate synthase subunit HisF from Chloroherpeton thalassium (strain ATCC 35110 / GB-78).